Here is a 406-residue protein sequence, read N- to C-terminus: Uronyl 2-sulfotransferase (406 aa).

Residues 1 to 49 (MKKKQQHPGGGADPWPHGAPMGGAPPGLGSWKRRVPLLPFLRFSLRDYG) lie on the Cytoplasmic side of the membrane. The helical; Signal-anchor for type II membrane protein transmembrane segment at 50 to 70 (FCMATLLVFCLGSLLYQLSGG) threads the bilayer. Topologically, residues 71 to 406 (PPRFLLDLRQ…EKWLEDIYKR (336 aa)) are lumenal. N-linked (GlcNAc...) asparagine glycans are attached at residues Asn-84, Asn-140, and Asn-155. The active site involves His-168. N-linked (GlcNAc...) asparagine glycans are attached at residues Asn-173 and Asn-319. Positions 387-399 (EPIDDEEQDDEKW) are enriched in acidic residues. The interval 387–406 (EPIDDEEQDDEKWLEDIYKR) is disordered.

The protein belongs to the sulfotransferase 3 family. In terms of tissue distribution, widely expressed.

The protein resides in the golgi apparatus membrane. Its function is as follows. Sulfotransferase that catalyzes the transfer of sulfate to the position 2 of uronyl residues in glycosaminoglycan chains. Has mainly activity toward iduronyl residues in dermatan sulfate, and weaker activity toward glucuronyl residues of chondroitin sulfate. Has little to no activity toward desulfated N-resulfated heparin or N-sulfoheparosan. The protein is Uronyl 2-sulfotransferase of Homo sapiens (Human).